The primary structure comprises 387 residues: Ferrochelatase (387 aa).

Fe cation-binding residues include histidine 196 and glutamate 277.

It belongs to the ferrochelatase family.

It localises to the cytoplasm. It carries out the reaction heme b + 2 H(+) = protoporphyrin IX + Fe(2+). It functions in the pathway porphyrin-containing compound metabolism; protoheme biosynthesis; protoheme from protoporphyrin-IX: step 1/1. In terms of biological role, catalyzes the ferrous insertion into protoporphyrin IX. This is Ferrochelatase from Rippkaea orientalis (strain PCC 8801 / RF-1) (Cyanothece sp. (strain PCC 8801)).